The chain runs to 414 residues: tRNA dimethylallyltransferase (414 aa).

An ATP-binding site is contributed by 33–40 (APTASGKT). 35-40 (TASGKT) is a substrate binding site. Interaction with substrate tRNA regions lie at residues 58 to 61 (DSAL), 182 to 186 (QRITR), and 266 to 271 (RCVGYR).

It belongs to the IPP transferase family. Monomer. Mg(2+) serves as cofactor.

It carries out the reaction adenosine(37) in tRNA + dimethylallyl diphosphate = N(6)-dimethylallyladenosine(37) in tRNA + diphosphate. Catalyzes the transfer of a dimethylallyl group onto the adenine at position 37 in tRNAs that read codons beginning with uridine, leading to the formation of N6-(dimethylallyl)adenosine (i(6)A). This chain is tRNA dimethylallyltransferase, found in Psychrobacter arcticus (strain DSM 17307 / VKM B-2377 / 273-4).